The chain runs to 504 residues: MNKNKIIVFDTTLRDGEQSPGASMNTAEKVELAIQLEKLGVDVIEAGFAAASPGDFDAIERICGAVSKIRVCSLARAIEKDIKAAGESIKSAKFKRIHTFIATSPIHMEYKLKLSPDDVIKKAINSIKYAKTFCDDVEFSCEDAGRSEISFIKEIVEAAINAGATTINLPDTVGYRLPSEMSYMIGELVKFVGDRAVISSHCHDDLGMSVANTIACIKAGARQIECTINGLGERAGNTALEEVVMAIKTRSDVFAPLYTDINFKEIYHSSRLVATITGIEPQPNKAIVGKNAFAHESGIHQDGVLKHKETYEIMRAEDIGLEKNSIVLGKHSGSHAFRDKLVSLGYNLSEDELANVFEKFKILADAKKEIFDDDLRELMTDELVKIPCAFEIIALSSSECNKGHASAALTLKHNDEILKDSALGNGVVDAIFKTIDRISGIKGNLKDYQVRAVSQGKDAQAKVTVKVLFENSSTIIGHGLDTDTLMATAKAYIGALNSYISMKQ.

The region spanning 6–267 (IIVFDTTLRD…YTDINFKEIY (262 aa)) is the Pyruvate carboxyltransferase domain. The Mn(2+) site is built by D15, H201, H203, and N237. The segment at 391 to 504 (EIIALSSSEC…ALNSYISMKQ (114 aa)) is regulatory domain.

The protein belongs to the alpha-IPM synthase/homocitrate synthase family. LeuA type 1 subfamily. As to quaternary structure, homodimer. The cofactor is Mn(2+).

The protein resides in the cytoplasm. It catalyses the reaction 3-methyl-2-oxobutanoate + acetyl-CoA + H2O = (2S)-2-isopropylmalate + CoA + H(+). It functions in the pathway amino-acid biosynthesis; L-leucine biosynthesis; L-leucine from 3-methyl-2-oxobutanoate: step 1/4. Catalyzes the condensation of the acetyl group of acetyl-CoA with 3-methyl-2-oxobutanoate (2-ketoisovalerate) to form 3-carboxy-3-hydroxy-4-methylpentanoate (2-isopropylmalate). The protein is 2-isopropylmalate synthase of Campylobacter hominis (strain ATCC BAA-381 / DSM 21671 / CCUG 45161 / LMG 19568 / NCTC 13146 / CH001A).